A 373-amino-acid chain; its full sequence is MHIHMMNRDEHIAKKVEGSISSFSGETSTSSKQIYVNPVTTTGTKSMEDDDVSLSLLYNLSTLHEKVHQIQSLVSFYMVSTNNINQSSGSTSLAVANIGSLVQEIITAASSMLYTCQQLQIGSNNNNNDIDNDQTVDAMVLEFSRQETDPGHDFVQESTNLFGVQERGQISFPDQNLDWYNTETINPKKDKHRSKPSSGSYDILELDVADLLAKYTHYCQICGKGFKRDANLRMHMRAHGDEYKTREALISPTSQDKKGGYSLKKHYYSCPQHGCRWNQRHEKFQPLKSVICAKNHYKRSHCPKMYMCRRCSVKHFSVLSDLRTHEKHCGDIKWVCSCGTKFSRKDKLMSHVSLFLGHVPAHGSSKPPTITLK.

2 C2H2-type zinc fingers span residues 217–239 and 327–362; these read HYCQ…MRAH and KHCG…VPAH.

As to expression, expressed at low levels in roots (e.g. root tips and lateral roots), leaves (e.g. at the edge of mature leaves, possibly in hydathodes, and in vascular bundles), flowers (e.g. floral filaments), stems, siliques and cotyledons.

The protein localises to the nucleus. Probable transcription factor. Together with STOP1, plays a critical role in tolerance to major stress factors in acid soils such as proton H(+) and aluminum ion Al(3+). Required for the expression of genes in response to acidic stress (e.g. ALMT1 and MATE), and Al-activated citrate exudation. The sequence is that of Protein SENSITIVE TO PROTON RHIZOTOXICITY 2 from Arabidopsis thaliana (Mouse-ear cress).